The chain runs to 431 residues: Glucose-1-phosphate adenylyltransferase (431 aa).

Lys39 is a binding site for beta-D-fructose 1,6-bisphosphate. 3 residues coordinate AMP: Arg40, His46, and Arg52. An alpha-D-glucose 1-phosphate-binding site is contributed by Tyr114. Arg130 provides a ligand contact to AMP. Alpha-D-glucose 1-phosphate contacts are provided by residues Gly179, 194 to 195, and Ser212; that span reads EK. 2 residues coordinate AMP: Glu370 and Arg386. Residues 419 to 423 and 429 to 431 each bind beta-D-fructose 1,6-bisphosphate; these read REMLR and QER.

It belongs to the bacterial/plant glucose-1-phosphate adenylyltransferase family. Homotetramer.

It carries out the reaction alpha-D-glucose 1-phosphate + ATP + H(+) = ADP-alpha-D-glucose + diphosphate. Its pathway is glycan biosynthesis; glycogen biosynthesis. Its activity is regulated as follows. Allosterically activated by fructose-1,6-bisphosphate (F16BP) and inhibited by AMP. In terms of biological role, involved in the biosynthesis of ADP-glucose, a building block required for the elongation reactions to produce glycogen. Catalyzes the reaction between ATP and alpha-D-glucose 1-phosphate (G1P) to produce pyrophosphate and ADP-Glc. The protein is Glucose-1-phosphate adenylyltransferase of Escherichia coli O7:K1 (strain IAI39 / ExPEC).